Here is a 229-residue protein sequence, read N- to C-terminus: Putative germin-like protein 3-4 (229 aa).

A signal peptide spans 1–31; that stretch reads MEHSFKTITAGVVFVVLLLQQAPVLIRATDA. C38 and C53 form a disulfide bridge. Residues 67–219 enclose the Cupin type-1 domain; the sequence is SKIATGGDVN…ALRVDTGVVE (153 aa). N-linked (GlcNAc...) asparagine glycosylation is found at N80 and N83. Residues H116, H118, E123, and H165 each coordinate Mn(2+).

It belongs to the germin family. As to quaternary structure, oligomer (believed to be a pentamer but probably hexamer).

It is found in the secreted. Its subcellular location is the extracellular space. The protein localises to the apoplast. In terms of biological role, may play a role in plant defense. Probably has no oxalate oxidase activity even if the active site is conserved. This is Putative germin-like protein 3-4 from Oryza sativa subsp. japonica (Rice).